A 96-amino-acid polypeptide reads, in one-letter code: Prokineticin Bm8-e (96 aa).

An N-terminal signal peptide occupies residues 1 to 19 (MKCFAQIVVLLLVIAFSHG). 5 disulfide bridges follow: Cys26-Cys38, Cys32-Cys50, Cys37-Cys78, Cys60-Cys86, and Cys80-Cys95.

Belongs to the AVIT (prokineticin) family. As to expression, expressed by the skin glands.

The protein resides in the secreted. Functionally, potent agonist for both PKR1/PROKR1 and PKR2/PROKR2, and inducer of a potent and long-lasting hyperalgesia. Also potentiates capsaicin-induced TRPV1 current, when tested on DRG neurons. At subnanomolar concentrations, this protein both induces potent chemotaxis of macrophages and stimulates LPS-induced production of the pro-inflammatory cytokines IL-1 and IL-12. In vivo, potently stimulates the contraction of the guinea-pig gastrointestinal (GI) smooth muscle (nanomolar concentration). The protein is Prokineticin Bm8-e of Bombina maxima (Giant fire-bellied toad).